The primary structure comprises 407 residues: Arginine deiminase (407 aa).

C397 (amidino-cysteine intermediate) is an active-site residue.

Belongs to the arginine deiminase family.

It is found in the cytoplasm. The catalysed reaction is L-arginine + H2O = L-citrulline + NH4(+). Its pathway is amino-acid degradation; L-arginine degradation via ADI pathway; carbamoyl phosphate from L-arginine: step 1/2. This Pediococcus pentosaceus (strain ATCC 25745 / CCUG 21536 / LMG 10740 / 183-1w) protein is Arginine deiminase.